The chain runs to 149 residues: UPF0179 protein Mbar_A0292 (149 aa).

This sequence belongs to the UPF0179 family.

In Methanosarcina barkeri (strain Fusaro / DSM 804), this protein is UPF0179 protein Mbar_A0292.